Consider the following 239-residue polypeptide: Large ribosomal subunit protein mL67 (239 aa).

This sequence belongs to the mitochondrion-specific ribosomal protein mL67 family. As to quaternary structure, component of the mitochondrial large ribosomal subunit (mt-LSU).

It localises to the nucleus. The protein localises to the mitochondrion. In terms of biological role, component of the mitochondrial ribosome (mitoribosome), a dedicated translation machinery responsible for the synthesis of mitochondrial genome-encoded proteins, including at least some of the essential transmembrane subunits of the mitochondrial respiratory chain. The mitoribosomes are attached to the mitochondrial inner membrane and translation products are cotranslationally integrated into the membrane. mL67/MHR1 also has extraribosomal functions, being involved in regulation of mitochondrial DNA recombination, maintenance and repair, and generation of homoplasmic cells. mL67/MHR1 also acts as transcription factor involved in regulation of RNA polymerase II-dependent transcription. This chain is Large ribosomal subunit protein mL67 (MHR1), found in Candida albicans (strain SC5314 / ATCC MYA-2876) (Yeast).